Consider the following 76-residue polypeptide: Vasotab-TY3 (76 aa).

A signal peptide spans 1 to 21; it reads MKFALFSVLVLMLIATFVAAD. Residues 22–76 form the Kazal-like domain; it reads DCPRICTSDYTPVCGTPSGGRRSANRTFANQCGLDSHNCLNKGDTYDKLHDGECK. 3 disulfides stabilise this stretch: cysteine 23–cysteine 60, cysteine 27–cysteine 53, and cysteine 35–cysteine 75.

As to expression, expressed by the salivary gland.

It is found in the secreted. In terms of biological role, vasodilator protein that inhibits vasoconstriction of isolated rat femoral artery induced by phenylephrine. Since platelet aggregation and vasoconstriction are key hemostatic responses, particularly in small wounds, this protein likely participates in the antihemostatic responses during blood feeding. Blocks L-type calcium channels (Cav1/CACNA1) in left ventricular myocytes isolated from rat hearts. In Tabanus yao (Horsefly), this protein is Vasotab-TY3.